A 175-amino-acid polypeptide reads, in one-letter code: ATP synthase subunit b (175 aa).

A helical membrane pass occupies residues 20 to 40 (LIFWTAVTFVIVLLILKQLAW).

It belongs to the ATPase B chain family. F-type ATPases have 2 components, F(1) - the catalytic core - and F(0) - the membrane proton channel. F(1) has five subunits: alpha(3), beta(3), gamma(1), delta(1), epsilon(1). F(0) has four main subunits: a(1), b(2) and c(10-14). The alpha and beta chains form an alternating ring which encloses part of the gamma chain. F(1) is attached to F(0) by a central stalk formed by the gamma and epsilon chains, while a peripheral stalk is formed by the delta and b chains.

It is found in the cell inner membrane. F(1)F(0) ATP synthase produces ATP from ADP in the presence of a proton or sodium gradient. F-type ATPases consist of two structural domains, F(1) containing the extramembraneous catalytic core and F(0) containing the membrane proton channel, linked together by a central stalk and a peripheral stalk. During catalysis, ATP synthesis in the catalytic domain of F(1) is coupled via a rotary mechanism of the central stalk subunits to proton translocation. In terms of biological role, component of the F(0) channel, it forms part of the peripheral stalk, linking F(1) to F(0). This Chlorobium limicola (strain DSM 245 / NBRC 103803 / 6330) protein is ATP synthase subunit b.